A 134-amino-acid polypeptide reads, in one-letter code: Small ribosomal subunit protein uS8c (134 aa).

Belongs to the universal ribosomal protein uS8 family. As to quaternary structure, part of the 30S ribosomal subunit.

It is found in the plastid. The protein resides in the chloroplast. Functionally, one of the primary rRNA binding proteins, it binds directly to 16S rRNA central domain where it helps coordinate assembly of the platform of the 30S subunit. The chain is Small ribosomal subunit protein uS8c (rps8) from Nicotiana tomentosiformis (Tobacco).